Consider the following 247-residue polypeptide: MSNEFIYGIHAVKAVLEREPERFIEAYVLKGRQDDRLMPILNDLQVCGVSIQQMTRKTLDDKAHGANHQGIIARVKVAKQLNENDIDDILAQHETPLLLVLDGVTDPHNLGACLRNADAAGVAAIIVPKDRSAPMNATVSKVACGAAEVVPLIRVTNLARTMRTLQEQGIWFVGTAGEATHDIYQAKLTGPLAIVMGAEGDGMRRLTRETCDDLIKIPMAGSVSSLNVSVASGICLFEAVRQRLAAK.

3 residues coordinate S-adenosyl-L-methionine: Gly-197, Ile-217, and Leu-226.

The protein belongs to the class IV-like SAM-binding methyltransferase superfamily. RNA methyltransferase TrmH family. RlmB subfamily.

The protein resides in the cytoplasm. The catalysed reaction is guanosine(2251) in 23S rRNA + S-adenosyl-L-methionine = 2'-O-methylguanosine(2251) in 23S rRNA + S-adenosyl-L-homocysteine + H(+). Specifically methylates the ribose of guanosine 2251 in 23S rRNA. The protein is 23S rRNA (guanosine-2'-O-)-methyltransferase RlmB of Vibrio parahaemolyticus serotype O3:K6 (strain RIMD 2210633).